The following is a 369-amino-acid chain: Anthranilate phosphoribosyltransferase (369 aa).

5-phospho-alpha-D-ribose 1-diphosphate-binding positions include G85, 88–89 (GD), T93, 95–98 (NLST), 113–121 (KHGNRAASS), and S125. G85 is an anthranilate binding site. Residue S97 participates in Mg(2+) binding. Position 116 (N116) interacts with anthranilate. R171 provides a ligand contact to anthranilate. Mg(2+) contacts are provided by D229 and E230.

This sequence belongs to the anthranilate phosphoribosyltransferase family. In terms of assembly, homodimer. It depends on Mg(2+) as a cofactor.

It carries out the reaction N-(5-phospho-beta-D-ribosyl)anthranilate + diphosphate = 5-phospho-alpha-D-ribose 1-diphosphate + anthranilate. It participates in amino-acid biosynthesis; L-tryptophan biosynthesis; L-tryptophan from chorismate: step 2/5. Catalyzes the transfer of the phosphoribosyl group of 5-phosphorylribose-1-pyrophosphate (PRPP) to anthranilate to yield N-(5'-phosphoribosyl)-anthranilate (PRA). The polypeptide is Anthranilate phosphoribosyltransferase (Frankia alni (strain DSM 45986 / CECT 9034 / ACN14a)).